The following is a 91-amino-acid chain: MAHKKAGGSSRNGRDSAGRRLGVKKFGGERVVSGNIIVRQRGTKWHPGANVGIGVDHTLFALADGAVKFLTKDKGRSYVSVVIEQQTEAAE.

The tract at residues Met1–Gly22 is disordered.

This sequence belongs to the bacterial ribosomal protein bL27 family.

This is Large ribosomal subunit protein bL27 from Methylocella silvestris (strain DSM 15510 / CIP 108128 / LMG 27833 / NCIMB 13906 / BL2).